Consider the following 103-residue polypeptide: Large ribosomal subunit protein bL21 (103 aa).

This sequence belongs to the bacterial ribosomal protein bL21 family. In terms of assembly, part of the 50S ribosomal subunit. Contacts protein L20.

In terms of biological role, this protein binds to 23S rRNA in the presence of protein L20. The sequence is that of Large ribosomal subunit protein bL21 from Bordetella parapertussis (strain 12822 / ATCC BAA-587 / NCTC 13253).